A 361-amino-acid polypeptide reads, in one-letter code: Phospho-N-acetylmuramoyl-pentapeptide-transferase (361 aa).

10 helical membrane-spanning segments follow: residues 28-48 (LAII…IEFL), 74-94 (TMGG…LADL), 99-119 (IWIT…DDYA), 133-153 (SKLL…EYLD), 168-188 (LSLD…VGSS), 203-223 (VPIA…GNLI), 236-256 (TGEL…FLWF), 263-283 (VFMG…ISVI), 288-308 (IVLA…ILQV), and 338-358 (KVVI…LSSL).

Belongs to the glycosyltransferase 4 family. MraY subfamily. Requires Mg(2+) as cofactor.

It is found in the cell membrane. The enzyme catalyses UDP-N-acetyl-alpha-D-muramoyl-L-alanyl-gamma-D-glutamyl-meso-2,6-diaminopimeloyl-D-alanyl-D-alanine + di-trans,octa-cis-undecaprenyl phosphate = di-trans,octa-cis-undecaprenyl diphospho-N-acetyl-alpha-D-muramoyl-L-alanyl-D-glutamyl-meso-2,6-diaminopimeloyl-D-alanyl-D-alanine + UMP. It participates in cell wall biogenesis; peptidoglycan biosynthesis. Its function is as follows. Catalyzes the initial step of the lipid cycle reactions in the biosynthesis of the cell wall peptidoglycan: transfers peptidoglycan precursor phospho-MurNAc-pentapeptide from UDP-MurNAc-pentapeptide onto the lipid carrier undecaprenyl phosphate, yielding undecaprenyl-pyrophosphoryl-MurNAc-pentapeptide, known as lipid I. The chain is Phospho-N-acetylmuramoyl-pentapeptide-transferase from Rickettsia rickettsii.